The chain runs to 724 residues: MSLLQLSPLLALLLLLCSSVSETAADYENTWNFYYERPCCTGNDQGNNNYGKHGADHVREFNCGKLYYRTFHMNEDRDTLYVGAMDRVFRVNLQNISSSNCNRDVINLEPTRDDVVSCVSKGKSQIFDCKNHVRVIQSMDQGDRLYVCGTNAHNPKDYVIYANLTHLPRSEYVIGVGLGIAKCPYDPLDNSTAIYVENGNPGGLPGLYSGTNAEFTKADTVIFRTDLYNTSAKRLEYKFKRTLKYDSKWLDKPNFVGSFDIGEYVYFFFRETAVEYINCGKAVYSRIARVCKKDVGGKNLLAHNWATYLKARLNCSISGEFPFYFNEIQSVYQLPSDKSRFFATFTTSTNGLIGSAVCSFHINEIQAAFNGKFKEQSSSNSAWLPVLNSRVPEPRPGTCVNDTSNLPDTVLNFIRSHPLMDKAVNHEHNNPVYYKRDLVFTKLVVDKIRIDILNQEYIVYYVGTNLGRIYKIVQYYRNGESLSKLLDIFEVAPNEAIQVMEISQTRKSLYIGTDHRIKQIDLAMCNRRYDNCFRCVRDPYCGWDKEANTCRPYELDLLQDVANETSDICDSSVLKKKIVVTYGQSVHLGCFVKIPEVLKNEQVTWYHHSKDKGRYEIRYSPTKYIETTERGLVVVSVNEADGGRYDCHLGGSLLCSYNITVDAHRCTPPNKSNDYQKIYSDWCHEFEKYKTAMKSWEKKQAQCSTRQNFSSNQHPNEIFRKPNV.

An N-terminal signal peptide occupies residues 1–25; it reads MSLLQLSPLLALLLLLCSSVSETAA. The 478-residue stretch at 45–522 folds into the Sema domain; that stretch reads QGNNNYGKHG…TDHRIKQIDL (478 aa). An N-linked (GlcNAc...) asparagine glycan is attached at Asn95. A disulfide bridge links Cys118 with Cys129. N-linked (GlcNAc...) asparagine glycans are attached at residues Asn163, Asn190, Asn229, and Asn314. 2 disulfides stabilise this stretch: Cys291/Cys399 and Cys315/Cys358. Residue Asn401 is glycosylated (N-linked (GlcNAc...) asparagine). 2 disulfides stabilise this stretch: Cys525–Cys541 and Cys535–Cys550. The Ig-like C2-type domain occupies 552 to 663; that stretch reads PYELDLLQDV…LCSYNITVDA (112 aa). Asn563 is a glycosylation site (N-linked (GlcNAc...) asparagine). Cys590 and Cys647 form a disulfide bridge. Asn658, Asn670, and Asn708 each carry an N-linked (GlcNAc...) asparagine glycan.

It belongs to the semaphorin family. Interacts with PlexB. As to expression, transiently expressed by a single large muscle during motoneuron outgrowth and synapse formation.

It is found in the secreted. Functionally, ligand for transmembrane receptor PlexB. Plays a role in growth cone guidance. Required for both proper adult behavior and survival. Can function as a selective target-derived signal that inhibits the formation of specific synaptic terminal arbors. Function in neurons is essential for adult survival, motor neuron survival, and is important for climbing behavior and activity. During embryogenesis, plays an important role in correct salivary gland positioning. The polypeptide is Semaphorin-2A (Drosophila melanogaster (Fruit fly)).